A 31-amino-acid polypeptide reads, in one-letter code: Cytochrome b6-f complex subunit 6 (31 aa).

The helical transmembrane segment at Leu-4–Ala-24 threads the bilayer.

It belongs to the PetL family. As to quaternary structure, the 4 large subunits of the cytochrome b6-f complex are cytochrome b6, subunit IV (17 kDa polypeptide, PetD), cytochrome f and the Rieske protein, while the 4 small subunits are PetG, PetL, PetM and PetN. The complex functions as a dimer.

It is found in the plastid. Its subcellular location is the chloroplast thylakoid membrane. In terms of biological role, component of the cytochrome b6-f complex, which mediates electron transfer between photosystem II (PSII) and photosystem I (PSI), cyclic electron flow around PSI, and state transitions. PetL is important for photoautotrophic growth as well as for electron transfer efficiency and stability of the cytochrome b6-f complex. The chain is Cytochrome b6-f complex subunit 6 from Tupiella akineta (Green alga).